Reading from the N-terminus, the 585-residue chain is Packaging protein UL32 (585 aa).

Residues 1–25 (MDRVESEEPMDGFESPVFSENTSSN) are disordered. Residues Cys-107, Cys-110, His-187, Cys-193, Cys-408, Cys-411, His-484, and Cys-491 each coordinate Zn(2+). Zinc finger stretches follow at residues 107-193 (CLVC…LHVC) and 408-491 (CMLC…DLLC).

Belongs to the herpesviridae UL32 protein family.

Its subcellular location is the host cytoplasm. The protein localises to the host nucleus. Functionally, plays a role in efficient localization of neo-synthesized capsids to nuclear replication compartments, thereby controlling cleavage and packaging of virus genomic DNA. The sequence is that of Packaging protein UL32 (26) from Varicella-zoster virus (strain Dumas) (HHV-3).